A 195-amino-acid chain; its full sequence is Recombination protein RecR (195 aa).

The segment at 53–68 (CTICHNLDTISPCSIC) adopts a C4-type zinc-finger fold. The Toprim domain occupies 76 to 171 (SIICVVEELG…KVTRLACGIP (96 aa)).

Belongs to the RecR family.

In terms of biological role, may play a role in DNA repair. It seems to be involved in an RecBC-independent recombinational process of DNA repair. It may act with RecF and RecO. The sequence is that of Recombination protein RecR from Anaplasma marginale (strain St. Maries).